The following is a 330-amino-acid chain: Cathepsin S (330 aa).

The N-terminal stretch at 1-17 (MAVLGAPGVLCDNGATA) is a signal peptide. The propeptide at 18–112 (ERPTLDHHWD…GTLKSSSNQT (95 aa)) is activation peptide. N-linked (GlcNAc...) asparagine glycosylation is found at asparagine 100 and asparagine 110. Intrachain disulfides connect cysteine 124–cysteine 222, cysteine 134–cysteine 179, cysteine 168–cysteine 211, and cysteine 271–cysteine 319. Cysteine 137 is a catalytic residue. Residues histidine 277 and asparagine 297 contribute to the active site.

It belongs to the peptidase C1 family. In terms of assembly, monomer. As to expression, highest levels occur in the ileum followed by spleen, brain, thyroid, ovary and uterus. Low levels are found in the liver, kidney, jejunum and lung with lowest levels in the heart.

It is found in the lysosome. The protein localises to the secreted. The protein resides in the cytoplasmic vesicle. It localises to the phagosome. The enzyme catalyses Similar to cathepsin L, but with much less activity on Z-Phe-Arg-|-NHMec, and more activity on the Z-Val-Val-Arg-|-Xaa compound.. In terms of biological role, thiol protease. Key protease responsible for the removal of the invariant chain from MHC class II molecules and MHC class II antigen presentation. The bond-specificity of this proteinase is in part similar to the specificities of cathepsin L. This is Cathepsin S (Ctss) from Rattus norvegicus (Rat).